Consider the following 204-residue polypeptide: 3-isopropylmalate dehydratase small subunit (204 aa).

It belongs to the LeuD family. LeuD type 1 subfamily. As to quaternary structure, heterodimer of LeuC and LeuD.

It carries out the reaction (2R,3S)-3-isopropylmalate = (2S)-2-isopropylmalate. The protein operates within amino-acid biosynthesis; L-leucine biosynthesis; L-leucine from 3-methyl-2-oxobutanoate: step 2/4. Catalyzes the isomerization between 2-isopropylmalate and 3-isopropylmalate, via the formation of 2-isopropylmaleate. The polypeptide is 3-isopropylmalate dehydratase small subunit (Clavibacter michiganensis subsp. michiganensis (strain NCPPB 382)).